Here is a 481-residue protein sequence, read N- to C-terminus: Argininosuccinate lyase (481 aa).

A compositionally biased stretch (polar residues) spans 1–17; that stretch reads MKNAPVDTQSDAATSFE. Residues 1-25 are disordered; it reads MKNAPVDTQSDAATSFEGTAANPQW.

The protein belongs to the lyase 1 family. Argininosuccinate lyase subfamily.

The protein localises to the cytoplasm. The enzyme catalyses 2-(N(omega)-L-arginino)succinate = fumarate + L-arginine. The protein operates within amino-acid biosynthesis; L-arginine biosynthesis; L-arginine from L-ornithine and carbamoyl phosphate: step 3/3. The chain is Argininosuccinate lyase from Gluconobacter oxydans (strain 621H) (Gluconobacter suboxydans).